Consider the following 413-residue polypeptide: NAD(P)H oxidoreductase RTN4IP1, mitochondrial (413 aa).

A mitochondrion-targeting transit peptide spans 1 to 23 (MTAAGFNSILCLRQLVRLNRRQY). The tract at residues 27 to 52 (AKSVLSGSQTNDQATPPPTSKSADKM) is disordered. Over residues 31–40 (LSGSQTNDQA) the composition is skewed to polar residues. Residues 61–405 (GDIDELQLSE…SGHLRGKIVV (345 aa)) enclose the Enoyl reductase (ER) domain. Residues serine 228, glycine 230, valine 231, serine 251, tyrosine 269, glycine 353, phenylalanine 355, histidine 398, and arginine 400 each contribute to the NADPH site.

The protein belongs to the zinc-containing alcohol dehydrogenase family. Quinone oxidoreductase subfamily.

The protein localises to the mitochondrion matrix. It carries out the reaction a quinone + NADH + H(+) = a quinol + NAD(+). It catalyses the reaction a quinone + NADPH + H(+) = a quinol + NADP(+). The protein operates within cofactor biosynthesis; ubiquinone biosynthesis. NAD(P)H oxidoreductase. Involved in the ubiquinone biosynthetic pathway. This Drosophila melanogaster (Fruit fly) protein is NAD(P)H oxidoreductase RTN4IP1, mitochondrial.